We begin with the raw amino-acid sequence, 146 residues long: uncharacterized protein (146 aa).

A Glutaredoxin domain is found at 34–135 (EDKIVNDVMT…PLLEKAHALF (102 aa)). Cysteine 54 lines the [2Fe-2S] cluster pocket.

This sequence belongs to the glutaredoxin family. Monothiol subfamily.

This is an uncharacterized protein from Caenorhabditis elegans.